The chain runs to 78 residues: U23-theraphotoxin-Cg1a 1 (78 aa).

The signal sequence occupies residues M1–A21. The propeptide occupies S22–R49. Disulfide bonds link C50–C64, C57–C69, and C63–C75.

This sequence belongs to the neurotoxin 10 (Hwtx-1) family. 64 (Jztx-20) subfamily. In terms of tissue distribution, expressed by the venom gland.

The protein localises to the secreted. In terms of biological role, probable ion channel inhibitor. The protein is U23-theraphotoxin-Cg1a 1 of Chilobrachys guangxiensis (Chinese earth tiger tarantula).